The primary structure comprises 255 residues: Venom allergen-1 (255 aa).

The N-terminal stretch at 1 to 21 (MASHVIVKFITAAILIGSCYA) is a signal peptide. Residues 65–210 (LKKHNELRAE…VIKYYLVCNY (146 aa)) enclose the SCP domain. N-linked (GlcNAc...) asparagine glycosylation is found at asparagine 146 and asparagine 209.

This sequence belongs to the CRISP family. In terms of assembly, interacts with human LRPPRC; the interaction interrupts association between BECN1 and LRPPRC. Interacts with human CD4. (Microbial infection) Interacts with Zika virus envelope protein E and Zika virus-like particles; the interaction does not affect Zika virus replication in human endothelial cells and keratinocytes. Saliva (at protein level). Female salivary gland. No or low-level expression in female hemolymph, midgut, Malpighian tubule system and ovary. No or low-level expression in male tissues.

Its subcellular location is the secreted. It localises to the host endosome. It is found in the host mitochondrion. In terms of biological role, activates autophagy in human monocytic cells, dendritic cells and macrophages. Promotes activation of human CD4(+) T-cells. Does not affect cytokine expression in human monocytic cells. Its function is as follows. (Microbial infection) Promotes dengue virus type 2 replication in human monocytic cells, dendritic cells and macrophages. Pro-viral properties are linked to BECN1-mediated autophagy activation in the host. Does not directly interact with the purified envelope protein of dengue virus type 2. (Microbial infection) Promotes Zika virus replication in human monocytic cells, dendritic cells and macrophages. Facilitates Zika virus transmission from infected mosquitoes to the host in mouse model. Pro-viral properties are linked to BECN1-mediated autophagy activation in the host. Does not affect Zika virus replication in human endothelial cells and keratinocytes. Functionally, (Microbial infection) Promotes Semliki Forest virus replication in human monocytic cells. In terms of biological role, (Microbial infection) Does not influence Batai virus replication in human monocytic cells. This Aedes aegypti (Yellowfever mosquito) protein is Venom allergen-1.